A 294-amino-acid polypeptide reads, in one-letter code: uncharacterized protein (294 aa).

It localises to the mitochondrion. This is an uncharacterized protein from Zea mays (Maize).